We begin with the raw amino-acid sequence, 134 residues long: Probable glycine cleavage system H protein (134 aa).

Positions 29–110 (TVLVGISDYA…PYENWIAKLK (82 aa)) constitute a Lipoyl-binding domain. Residue lysine 70 is modified to N6-lipoyllysine.

The protein belongs to the GcvH family. As to quaternary structure, the glycine cleavage system is composed of four proteins: P, T, L and H. It depends on (R)-lipoate as a cofactor.

The glycine cleavage system catalyzes the degradation of glycine. The H protein shuttles the methylamine group of glycine from the P protein to the T protein. The polypeptide is Probable glycine cleavage system H protein (Thermococcus kodakarensis (strain ATCC BAA-918 / JCM 12380 / KOD1) (Pyrococcus kodakaraensis (strain KOD1))).